The following is a 532-amino-acid chain: Cytochrome P450 714B2 (532 aa).

The Lumenal portion of the chain corresponds to 1–2 (ME). The helical; Signal-anchor for type III membrane protein transmembrane segment at 3 to 23 (VGMVVVVAAKVLVSLWCVGAC) threads the bilayer. Over 24–532 (CLAAYLYRVV…LTRVQGAYRH (509 aa)) the chain is Cytoplasmic. Residue Cys-474 coordinates heme.

The protein belongs to the cytochrome P450 family. Requires heme as cofactor. Highly expressed in shoot, spikelet and uppermost internode. Detected in roots, leaves and anthers.

The protein localises to the membrane. Its function is as follows. Catalyzes the 13-hydroxylation of gibberellins (GAs). Determines the ratio of GA4 and GA1. Converts GA12 into GA53. This Oryza sativa subsp. japonica (Rice) protein is Cytochrome P450 714B2 (CYP714B2).